Consider the following 407-residue polypeptide: S-adenosylmethionine synthase (407 aa).

An ATP-binding site is contributed by histidine 19. A Mg(2+)-binding site is contributed by aspartate 21. Glutamate 47 serves as a coordination point for K(+). Residues glutamate 60 and glutamine 103 each coordinate L-methionine. Residues 103–113 (QSQEIADGVDN) form a flexible loop region. Positions 107–134 (IADGVDNSDEARTNGDVEEDDRAGAGDQ) are disordered. ATP-binding positions include 178-180 (DGK), aspartate 258, 264-265 (RK), alanine 281, and lysine 285. Residue aspartate 258 participates in L-methionine binding. Lysine 289 contacts L-methionine.

The protein belongs to the AdoMet synthase family. Homotetramer; dimer of dimers. Requires Mg(2+) as cofactor. K(+) is required as a cofactor.

The protein resides in the cytoplasm. The catalysed reaction is L-methionine + ATP + H2O = S-adenosyl-L-methionine + phosphate + diphosphate. It functions in the pathway amino-acid biosynthesis; S-adenosyl-L-methionine biosynthesis; S-adenosyl-L-methionine from L-methionine: step 1/1. Its function is as follows. Catalyzes the formation of S-adenosylmethionine (AdoMet) from methionine and ATP. The overall synthetic reaction is composed of two sequential steps, AdoMet formation and the subsequent tripolyphosphate hydrolysis which occurs prior to release of AdoMet from the enzyme. The polypeptide is S-adenosylmethionine synthase (Corynebacterium glutamicum (strain ATCC 13032 / DSM 20300 / JCM 1318 / BCRC 11384 / CCUG 27702 / LMG 3730 / NBRC 12168 / NCIMB 10025 / NRRL B-2784 / 534)).